The following is a 395-amino-acid chain: Elongation factor Tu (395 aa).

Positions 10–204 (KPHVNIGTIG…AVDEYIPTPQ (195 aa)) constitute a tr-type G domain. Positions 19-26 (GHVDHGKT) are G1. Residue 19–26 (GHVDHGKT) coordinates GTP. Threonine 26 contacts Mg(2+). The G2 stretch occupies residues 60–64 (GITIS). Residues 81–84 (DCPG) form a G3 region. Residues 81–85 (DCPGH) and 136–139 (NKCD) each bind GTP. Residues 136–139 (NKCD) are G4. Residues 174 to 176 (SAL) are G5.

This sequence belongs to the TRAFAC class translation factor GTPase superfamily. Classic translation factor GTPase family. EF-Tu/EF-1A subfamily. In terms of assembly, monomer.

It localises to the cytoplasm. It catalyses the reaction GTP + H2O = GDP + phosphate + H(+). GTP hydrolase that promotes the GTP-dependent binding of aminoacyl-tRNA to the A-site of ribosomes during protein biosynthesis. The chain is Elongation factor Tu from Anoxybacillus flavithermus (strain DSM 21510 / WK1).